We begin with the raw amino-acid sequence, 314 residues long: DNA-directed RNA polymerase subunit alpha (314 aa).

The interval M1–T228 is alpha N-terminal domain (alpha-NTD). An alpha C-terminal domain (alpha-CTD) region spans residues K245–E314.

Belongs to the RNA polymerase alpha chain family. In terms of assembly, homodimer. The RNAP catalytic core consists of 2 alpha, 1 beta, 1 beta' and 1 omega subunit. When a sigma factor is associated with the core the holoenzyme is formed, which can initiate transcription.

It catalyses the reaction RNA(n) + a ribonucleoside 5'-triphosphate = RNA(n+1) + diphosphate. Its function is as follows. DNA-dependent RNA polymerase catalyzes the transcription of DNA into RNA using the four ribonucleoside triphosphates as substrates. This chain is DNA-directed RNA polymerase subunit alpha, found in Shouchella clausii (strain KSM-K16) (Alkalihalobacillus clausii).